A 160-amino-acid chain; its full sequence is Cytochrome b6-f complex subunit 4 (160 aa).

The next 3 membrane-spanning stretches (helical) occupy residues 36–56 (LLYM…GLAV), 95–115 (LLGV…PFIE), and 131–151 (TIFL…TLPI).

This sequence belongs to the cytochrome b family. PetD subfamily. The 4 large subunits of the cytochrome b6-f complex are cytochrome b6, subunit IV (17 kDa polypeptide, petD), cytochrome f and the Rieske protein, while the 4 small subunits are petG, petL, petM and petN. The complex functions as a dimer.

It localises to the plastid. Its subcellular location is the chloroplast thylakoid membrane. Functionally, component of the cytochrome b6-f complex, which mediates electron transfer between photosystem II (PSII) and photosystem I (PSI), cyclic electron flow around PSI, and state transitions. The protein is Cytochrome b6-f complex subunit 4 of Staurastrum punctulatum (Green alga).